The primary structure comprises 86 residues: Small ribosomal subunit protein uS17 (86 aa).

Belongs to the universal ribosomal protein uS17 family. As to quaternary structure, part of the 30S ribosomal subunit.

Functionally, one of the primary rRNA binding proteins, it binds specifically to the 5'-end of 16S ribosomal RNA. The polypeptide is Small ribosomal subunit protein uS17 (Caldicellulosiruptor saccharolyticus (strain ATCC 43494 / DSM 8903 / Tp8T 6331)).